The chain runs to 88 residues: MKSKEILGYDIKEISNQTVEQLIEKKKELQGKLNDLQQELLKRKVEARMGTLKNTASIRNLRKDIARILTLLSIINKEIENKKKESKK.

The protein belongs to the universal ribosomal protein uL29 family.

This chain is Large ribosomal subunit protein uL29 (rpl29), found in Sulfurisphaera tokodaii (strain DSM 16993 / JCM 10545 / NBRC 100140 / 7) (Sulfolobus tokodaii).